Reading from the N-terminus, the 89-residue chain is MAKESVKARERKKQATVERFAAKRKALKEAGDYVGLDKLPKNASPVRLHNRCKLTGRPRGYMRKFGINRVTFRELAANGKIPGVTRASW.

Belongs to the universal ribosomal protein uS14 family. As to quaternary structure, part of the 30S ribosomal subunit. Contacts proteins S3 and S10.

Binds 16S rRNA, required for the assembly of 30S particles and may also be responsible for determining the conformation of the 16S rRNA at the A site. The sequence is that of Small ribosomal subunit protein uS14 from Cytophaga hutchinsonii (strain ATCC 33406 / DSM 1761 / CIP 103989 / NBRC 15051 / NCIMB 9469 / D465).